The sequence spans 567 residues: Hexose transporter HXT11 (567 aa).

The segment covering 1–22 (MSGVNNTSANELSTTMSNSNSA) has biased composition (polar residues). The disordered stretch occupies residues 1-45 (MSGVNNTSANELSTTMSNSNSAVGAPSVKTEHGDSKNSLNLDANE). The Cytoplasmic segment spans residues 1-56 (MSGVNNTSANELSTTMSNSNSAVGAPSVKTEHGDSKNSLNLDANEPPIDLPQKPLS). A helical membrane pass occupies residues 57–77 (AYTTVAILCLMIAFGGFIFGW). Residues 78 to 112 (DTGTISGFVNLSDFIRRFGQKNDKGTYYLSKVRMG) lie on the Extracellular side of the membrane. N-linked (GlcNAc...) asparagine glycosylation occurs at N87. Residues 113 to 133 (LIVSIFNIGCAIGGIVLSKVG) traverse the membrane as a helical segment. Residues 134–139 (DIYGRR) are Cytoplasmic-facing. Residues 140–160 (IGLITVTAIYVVGILIQITSI) form a helical membrane-spanning segment. Residues 161-170 (NKWYQYFIGR) lie on the Extracellular side of the membrane. The helical transmembrane segment at 171-191 (IISGLGVGGIAVLSPMLISEV) threads the bilayer. The Cytoplasmic portion of the chain corresponds to 192–197 (APKHIR). Residues 198–218 (GTLVQLYQLMGTMGIFLGYCT) form a helical membrane-spanning segment. Residues 219–232 (NYGTKNYHNATQWR) lie on the Extracellular side of the membrane. N-linked (GlcNAc...) asparagine glycosylation is present at N227. A helical transmembrane segment spans residues 233 to 253 (VGLGLCFAWATFMVSGMMFVP). At 254–336 (ESPRYLIEVG…IQSLQQLTGD (83 aa)) the chain is on the cytoplasmic side. Residues 337-353 (NYFFYYGTTIFKSVGLK) form a helical membrane-spanning segment. Over 354–359 (DSFQTS) the chain is Extracellular. Residues 360 to 377 (IIIGVVNFFSSFIAVYTI) form a helical membrane-spanning segment. Residues 378 to 384 (ERFGRRT) are Cytoplasmic-facing. The chain crosses the membrane as a helical span at residues 385-405 (CLLWGAASMLCCFAVFASVGV). Residues 406–429 (TKLWPQGSSHQDITSQGAGNCMIV) are Extracellular-facing. Residues 430-450 (FTMFFIFSFATTWAGGCYVIV) form a helical membrane-spanning segment. Topologically, residues 451–467 (SETFPLRVKSRGMAIAT) are cytoplasmic. Residues 468-488 (AANWMWGFLISFFTPFITGAI) form a helical membrane-spanning segment. N489 is a topological domain (extracellular). A helical membrane pass occupies residues 490–510 (FYYGYVFLGCLVFAYFYVFFF). Over 511 to 567 (VPETKGLTLEEVNTMWLEGVPAWKSASWVPPERRTADYDADAIDHDNRPIYKRFFSS) the chain is Cytoplasmic.

This sequence belongs to the major facilitator superfamily. Sugar transporter (TC 2.A.1.1) family.

Its subcellular location is the membrane. Probable glucose transporter. This chain is Hexose transporter HXT11 (HXT11), found in Saccharomyces cerevisiae (strain ATCC 204508 / S288c) (Baker's yeast).